Consider the following 339-residue polypeptide: DNA-directed RNA polymerase RPB7 homolog (339 aa).

This sequence belongs to the Asfivirus DNA-directed RNA polymerase RPB7 homolog family. As to quaternary structure, part of the viral DNA-directed RNA polymerase that consists of 8 polII-like subunits (RPB1, RPB2, RPB3, RPB5, RPB6, RPB7, RPB9, RPB10), a capping enzyme and a termination factor.

The protein localises to the host cytoplasm. The protein resides in the virion. Functionally, component of the DNA-directed RNA polymerase (RNAP) that catalyzes the transcription in the cytoplasm of viral DNA into RNA using the four ribonucleoside triphosphates as substrates. The polypeptide is DNA-directed RNA polymerase RPB7 homolog (African swine fever virus (strain Badajoz 1971 Vero-adapted) (Ba71V)).